The chain runs to 368 residues: Protein ALTERED XYLOGLUCAN 9 (368 aa).

Residues 1 to 32 are Cytoplasmic-facing; sequence MLGAIHLGVLAACFVLFVPMAMAGWHLSRNKM. Residues 33–53 traverse the membrane as a helical segment; the sequence is LFFSGALFISLAVCVHLTPYF. Residues 54–368 lie on the Lumenal side of the membrane; it reads PSVSDIVASV…ALLIESHQSL (315 aa). Residues Asn99, Asn137, and Asn235 are each glycosylated (N-linked (GlcNAc...) asparagine).

Its subcellular location is the golgi apparatus membrane. Its function is as follows. Component of the plant cell wall polysaccharide acetylation pathway. Does not directly catalyze O-acetylation of xyloglucan but exhibits weak acetylesterase activity in vitro. This Arabidopsis thaliana (Mouse-ear cress) protein is Protein ALTERED XYLOGLUCAN 9.